We begin with the raw amino-acid sequence, 405 residues long: MAIKTLKDLLAEGVEGRHVLVRSDFNVPLNDDREITDAGRITASLPTIKALVDNGARVILMAHLGRPKGEVNEKFSLAPVAEALSEALGQYVALAGDVVGEDAHERANGLNDGDVLLLENVRFDPRETSKEEAERGEFADQLVALTAENGAFVSDGFGVVHRAQASVFDVAQRLPHYAGTLVEKELEVLGNKVASAPERPYAVILGGAKVSDKLGVIEALATKADKLIIGGGMCYTFLAAKGINVQKSLLQEEQINKCKELLEAYADKIVLPVDLVAAAEFASDAENKIVAIDEIPEGWMSLDVGPKTVEKFAEVLATSKTVFWNGPMGVFEFENFSAGTRGVAEAIIAATANGAFSVVGGGDSAAAVRLLGLDEDGFSHISTGGGASLELLEGKNLPGVSVLES.

Substrate is bound by residues 24–26 (DFN), Arg40, 63–66 (HLGR), Arg122, and Arg162. ATP-binding positions include Lys213, Glu332, and 361 to 364 (GGDS).

The protein belongs to the phosphoglycerate kinase family. As to quaternary structure, monomer.

It localises to the cytoplasm. The enzyme catalyses (2R)-3-phosphoglycerate + ATP = (2R)-3-phospho-glyceroyl phosphate + ADP. It functions in the pathway carbohydrate degradation; glycolysis; pyruvate from D-glyceraldehyde 3-phosphate: step 2/5. This chain is Phosphoglycerate kinase, found in Corynebacterium diphtheriae (strain ATCC 700971 / NCTC 13129 / Biotype gravis).